A 160-amino-acid chain; its full sequence is Large ribosomal subunit protein eL21 (160 aa).

Belongs to the eukaryotic ribosomal protein eL21 family.

The chain is Large ribosomal subunit protein eL21 (RPL21) from Encephalitozoon cuniculi (strain GB-M1) (Microsporidian parasite).